The sequence spans 218 residues: GEM-like protein 6 (218 aa).

The region spanning 96-174 (KIYKRLFKVC…CKINGVNQSQ (79 aa)) is the GRAM domain.

The protein belongs to the GEM family.

The protein is GEM-like protein 6 of Arabidopsis thaliana (Mouse-ear cress).